The primary structure comprises 309 residues: Carbamate kinase 3 (309 aa).

This sequence belongs to the carbamate kinase family.

The protein resides in the cytoplasm. It carries out the reaction hydrogencarbonate + NH4(+) + ATP = carbamoyl phosphate + ADP + H2O + H(+). Its pathway is metabolic intermediate metabolism; carbamoyl phosphate degradation; CO(2) and NH(3) from carbamoyl phosphate: step 1/1. The polypeptide is Carbamate kinase 3 (arcC3) (Staphylococcus aureus (strain USA300)).